The sequence spans 313 residues: Ribosomal RNA small subunit methyltransferase H (313 aa).

S-adenosyl-L-methionine is bound by residues 35–37, D55, F79, D101, and Q108; that span reads GGH.

It belongs to the methyltransferase superfamily. RsmH family.

Its subcellular location is the cytoplasm. It catalyses the reaction cytidine(1402) in 16S rRNA + S-adenosyl-L-methionine = N(4)-methylcytidine(1402) in 16S rRNA + S-adenosyl-L-homocysteine + H(+). Its function is as follows. Specifically methylates the N4 position of cytidine in position 1402 (C1402) of 16S rRNA. This is Ribosomal RNA small subunit methyltransferase H from Escherichia coli O127:H6 (strain E2348/69 / EPEC).